The sequence spans 430 residues: Long-chain specific acyl-CoA dehydrogenase, mitochondrial (430 aa).

The N-terminal 30 residues, 1-30 (MATRLLRGSLRLWGGLCAPRLPTASRCSHS), are a transit peptide targeting the mitochondrion. Position 42 is an N6-acetyllysine (Lys-42). Phosphoserine occurs at positions 54 and 55. Lys-66 and Lys-81 each carry N6-acetyllysine; alternate. Lys-66 and Lys-81 each carry N6-succinyllysine; alternate. Lys-92 and Lys-95 each carry N6-acetyllysine. Lys-165 bears the N6-succinyllysine mark. FAD-binding positions include 170–179 (IAMTEPGAGS) and 203–205 (FIT). A substrate-binding site is contributed by Ser-179. 227–228 (AH) is a substrate binding site. N6-succinyllysine is present on Lys-240. An N6-acetyllysine; alternate mark is found at Lys-254 and Lys-279. Residues Lys-254 and Lys-279 each carry the N6-succinyllysine; alternate modification. Substrate-binding positions include Tyr-282 and 289–292 (PQER). Residue Glu-291 is the Proton acceptor of the active site. Arg-317 is a binding site for FAD. Lys-318 carries the post-translational modification N6-acetyllysine. An N6-acetyllysine; alternate modification is found at Lys-322. Lys-322 bears the N6-succinyllysine; alternate mark. Gln-328 provides a ligand contact to FAD. Lys-358 is modified (N6-acetyllysine). Ser-362 carries the post-translational modification Phosphoserine. An FAD-binding site is contributed by 385–389 (QLHGG). Residue 412-413 (GG) coordinates substrate. 414 to 416 (TNE) is a binding site for FAD.

The protein belongs to the acyl-CoA dehydrogenase family. Homotetramer. Requires FAD as cofactor. Post-translationally, acetylation at Lys-318 and Lys-322 in proximity of the cofactor-binding sites strongly reduces catalytic activity. These sites are deacetylated by SIRT3.

It is found in the mitochondrion matrix. The catalysed reaction is a long-chain 2,3-saturated fatty acyl-CoA + oxidized [electron-transfer flavoprotein] + H(+) = a long-chain (2E)-enoyl-CoA + reduced [electron-transfer flavoprotein]. The enzyme catalyses hexanoyl-CoA + oxidized [electron-transfer flavoprotein] + H(+) = (2E)-hexenoyl-CoA + reduced [electron-transfer flavoprotein]. It carries out the reaction octanoyl-CoA + oxidized [electron-transfer flavoprotein] + H(+) = (2E)-octenoyl-CoA + reduced [electron-transfer flavoprotein]. It catalyses the reaction decanoyl-CoA + oxidized [electron-transfer flavoprotein] + H(+) = (2E)-decenoyl-CoA + reduced [electron-transfer flavoprotein]. The catalysed reaction is dodecanoyl-CoA + oxidized [electron-transfer flavoprotein] + H(+) = (2E)-dodecenoyl-CoA + reduced [electron-transfer flavoprotein]. The enzyme catalyses tetradecanoyl-CoA + oxidized [electron-transfer flavoprotein] + H(+) = (2E)-tetradecenoyl-CoA + reduced [electron-transfer flavoprotein]. It carries out the reaction oxidized [electron-transfer flavoprotein] + hexadecanoyl-CoA + H(+) = (2E)-hexadecenoyl-CoA + reduced [electron-transfer flavoprotein]. It catalyses the reaction octadecanoyl-CoA + oxidized [electron-transfer flavoprotein] + H(+) = (2E)-octadecenoyl-CoA + reduced [electron-transfer flavoprotein]. The catalysed reaction is eicosanoyl-CoA + oxidized [electron-transfer flavoprotein] + H(+) = (2E)-eicosenoyl-CoA + reduced [electron-transfer flavoprotein]. The enzyme catalyses docosanoyl-CoA + oxidized [electron-transfer flavoprotein] + H(+) = (2E)-docosenoyl-CoA + reduced [electron-transfer flavoprotein]. It carries out the reaction tetracosanoyl-CoA + oxidized [electron-transfer flavoprotein] + H(+) = (2E)-tetracosenoyl-CoA + reduced [electron-transfer flavoprotein]. It catalyses the reaction (5E)-tetradecenoyl-CoA + oxidized [electron-transfer flavoprotein] + H(+) = (2E,5E)-tetradecadienoyl-CoA + reduced [electron-transfer flavoprotein]. The catalysed reaction is (5Z)-tetradecenoyl-CoA + oxidized [electron-transfer flavoprotein] + H(+) = (2E,5Z)-tetradecadienoyl-CoA + reduced [electron-transfer flavoprotein]. The enzyme catalyses oxidized [electron-transfer flavoprotein] + (9Z)-octadecenoyl-CoA + H(+) = (2E,9Z)-octadecadienoyl-CoA + reduced [electron-transfer flavoprotein]. It participates in lipid metabolism; mitochondrial fatty acid beta-oxidation. Its function is as follows. Long-chain specific acyl-CoA dehydrogenase is one of the acyl-CoA dehydrogenases that catalyze the first step of mitochondrial fatty acid beta-oxidation, an aerobic process breaking down fatty acids into acetyl-CoA and allowing the production of energy from fats. The first step of fatty acid beta-oxidation consists in the removal of one hydrogen from C-2 and C-3 of the straight-chain fatty acyl-CoA thioester, resulting in the formation of trans-2-enoyl-CoA. Among the different mitochondrial acyl-CoA dehydrogenases, long-chain specific acyl-CoA dehydrogenase can act on saturated and unsaturated acyl-CoAs with 6 to 24 carbons with a preference for 8 to 18 carbons long primary chains. The polypeptide is Long-chain specific acyl-CoA dehydrogenase, mitochondrial (Sus scrofa (Pig)).